Here is a 380-residue protein sequence, read N- to C-terminus: Alpha-glucoside transport system permease protein AglG (380 aa).

6 helical membrane-spanning segments follow: residues Val-13–Ile-33, Val-179–Gly-199, Val-202–Leu-222, Thr-239–Leu-259, Ile-288–Thr-308, and Glu-344–Leu-364. An ABC transmembrane type-1 domain is found at Phe-167 to Leu-364.

The protein belongs to the binding-protein-dependent transport system permease family. MalFG subfamily.

The protein resides in the cell inner membrane. Its function is as follows. Part of the binding-protein-dependent transport system for alpha-glucosides such as sucrose, maltose and trehalose. Probably responsible for the translocation of the substrate across the membrane. The polypeptide is Alpha-glucoside transport system permease protein AglG (aglG) (Rhizobium meliloti (strain 1021) (Ensifer meliloti)).